A 347-amino-acid chain; its full sequence is Phenylalanine--tRNA ligase alpha subunit (347 aa).

A disordered region spans residues 83-111 (QNLSGGDDSGADPTFDPTLPGTRPSLGHI). Mg(2+) is bound at residue Glu-274.

The protein belongs to the class-II aminoacyl-tRNA synthetase family. Phe-tRNA synthetase alpha subunit type 1 subfamily. As to quaternary structure, tetramer of two alpha and two beta subunits. The cofactor is Mg(2+).

It localises to the cytoplasm. It catalyses the reaction tRNA(Phe) + L-phenylalanine + ATP = L-phenylalanyl-tRNA(Phe) + AMP + diphosphate + H(+). In Rhodopirellula baltica (strain DSM 10527 / NCIMB 13988 / SH1), this protein is Phenylalanine--tRNA ligase alpha subunit.